The primary structure comprises 139 residues: Sec-independent protein translocase protein TatB (139 aa).

The helical transmembrane segment at 1–21 (MFDIGFTELLLVGLVALMVLG) threads the bilayer. The tract at residues 69–139 (LDLEREMKQS…PLRSDRPSEP (71 aa)) is disordered. Residues 80–95 (MPPPASNPAATPPSPP) show a composition bias toward pro residues.

Belongs to the TatB family. In terms of assembly, the Tat system comprises two distinct complexes: a TatABC complex, containing multiple copies of TatA, TatB and TatC subunits, and a separate TatA complex, containing only TatA subunits. Substrates initially bind to the TatABC complex, which probably triggers association of the separate TatA complex to form the active translocon.

It is found in the cell inner membrane. Functionally, part of the twin-arginine translocation (Tat) system that transports large folded proteins containing a characteristic twin-arginine motif in their signal peptide across membranes. Together with TatC, TatB is part of a receptor directly interacting with Tat signal peptides. TatB may form an oligomeric binding site that transiently accommodates folded Tat precursor proteins before their translocation. The sequence is that of Sec-independent protein translocase protein TatB from Stutzerimonas stutzeri (strain A1501) (Pseudomonas stutzeri).